A 195-amino-acid chain; its full sequence is U8 snoRNA-decapping enzyme (195 aa).

In terms of domain architecture, Nudix hydrolase spans 18-173; sequence DWRHACHALL…IGAAREQLLE (156 aa). Residues histidine 24, arginine 50, and phenylalanine 57 each coordinate substrate. Residues glycine 59, glutamate 76, glutamate 80, and histidine 99 each coordinate Mn(2+). The Nudix box motif lies at 61 to 82; the sequence is FVDAQDSCLEDGLNRELREELG. A substrate-binding site is contributed by glutamine 170. Position 173 (glutamate 173) interacts with Mn(2+).

This sequence belongs to the Nudix hydrolase family. NUDT16 subfamily. In terms of assembly, homodimer. It depends on Mg(2+) as a cofactor. Requires Mn(2+) as cofactor. Co(2+) serves as cofactor. Expressed in brain, testis, spleen, lung, heart, liver, kidney and muscle (at protein level).

It localises to the nucleus. Its subcellular location is the nucleolus. The protein resides in the nucleoplasm. The protein localises to the cytoplasm. The enzyme catalyses a 5'-end (N(7)-methyl 5'-triphosphoguanosine)-ribonucleoside in mRNA + H2O = N(7)-methyl-GDP + a 5'-end phospho-ribonucleoside in mRNA + 2 H(+). It catalyses the reaction IDP + H2O = IMP + phosphate + H(+). The catalysed reaction is dIDP + H2O = dIMP + phosphate + H(+). It carries out the reaction a 5'-end NAD(+)-phospho-ribonucleoside in mRNA + H2O = a 5'-end phospho-ribonucleoside in mRNA + NAD(+) + H(+). The enzyme catalyses a 5'-end FAD-phospho-ribonucleoside in mRNA + H2O = a 5'-end phospho-adenosine-phospho-ribonucleoside in mRNA + FMN + 2 H(+). It catalyses the reaction a 5'-end CoA-ribonucleoside in mRNA + H2O = a 5'-end phospho-adenosine-phospho-ribonucleoside in mRNA + (R)-4'-phosphopantetheine + 2 H(+). Functionally, RNA-binding and decapping enzyme that catalyzes the cleavage of the cap structure of snoRNAs and mRNAs in a metal-dependent manner. Part of the U8 snoRNP complex that is required for the accumulation of mature 5.8S and 28S rRNA. Has diphosphatase activity and removes m7G and/or m227G caps from U8 snoRNA and leaves a 5'monophosphate on the RNA. Also catalyzes the cleavage of the cap structure on mRNAs. Does not hydrolyze cap analog structures like 7-methylguanosine nucleoside triphosphate (m7GpppG). Also hydrolysis m7G- and m227G U3-capped RNAs but with less efficiencies. Has broad substrate specificity with manganese or cobalt as cofactor and can act on various RNA species. Binds to the U8 snoRNA; metal is not required for RNA-binding. May play a role in the regulation of snoRNAs and mRNAs degradation. Also acts as a phosphatase; hydrolyzes the non-canonical purine nucleotides inosine diphosphate (IDP) and deoxyinosine diphosphate (dITP) as well as guanosine diphosphate (GDP), deoxyguanosine diphosphate (dGDP), xanthine diphosphate (XDP), inosine triphosphate (ITP) and deoxyinosine triphosphate (ITP) to their respective monophosphate derivatives and does not distinguish between the deoxy- and ribose forms. The order of activity with different substrates is IDP &gt; dIDP &gt;&gt; GDP = dGDP &gt; XDP = ITP = dITP. Binds strongly to GTP, ITP and XTP. Participates in the hydrolysis of dIDP/IDP and probably excludes non-canonical purines from RNA and DNA precursor pools, thus preventing their incorporation into RNA and DNA and avoiding chromosomal lesions. Exhibits decapping activity towards NAD-capped RNAs and FAD-capped RNAs. Exhibits decapping activity towards dpCoA-capped RNAs in vitro. The protein is U8 snoRNA-decapping enzyme (Nudt16) of Mus musculus (Mouse).